The following is a 113-amino-acid chain: Large ribosomal subunit protein bL19 (113 aa).

This sequence belongs to the bacterial ribosomal protein bL19 family.

This protein is located at the 30S-50S ribosomal subunit interface and may play a role in the structure and function of the aminoacyl-tRNA binding site. The sequence is that of Large ribosomal subunit protein bL19 from Corynebacterium diphtheriae (strain ATCC 700971 / NCTC 13129 / Biotype gravis).